The primary structure comprises 158 residues: Transcription elongation factor GreA (158 aa).

Belongs to the GreA/GreB family.

Functionally, necessary for efficient RNA polymerase transcription elongation past template-encoded arresting sites. The arresting sites in DNA have the property of trapping a certain fraction of elongating RNA polymerases that pass through, resulting in locked ternary complexes. Cleavage of the nascent transcript by cleavage factors such as GreA or GreB allows the resumption of elongation from the new 3'terminus. GreA releases sequences of 2 to 3 nucleotides. This is Transcription elongation factor GreA from Methylobacterium sp. (strain 4-46).